We begin with the raw amino-acid sequence, 89 residues long: Dolichol-phosphate mannose synthase subunit 3 (89 aa).

Helical transmembrane passes span 7-27 (ILSLLVAISAFWIGLLQAAII) and 33-53 (WLLPIYFVVSLGCYGLLMVGV).

Belongs to the DPM3 family. Component of the dolichol-phosphate mannose (DPM) synthase complex composed of DPMS1, DPMS2 and DPMS3; in the complex interacts directly with DPMS1 and DPMS2.

The protein localises to the endoplasmic reticulum membrane. It participates in protein modification; protein glycosylation. Functionally, regulates the biosynthesis of dolichol phosphate-mannose. Regulatory subunit of the dolichol-phosphate mannose (DPM) synthase complex; essential for the ER localization and stable expression of DPMS1. This is Dolichol-phosphate mannose synthase subunit 3 from Arabidopsis thaliana (Mouse-ear cress).